The chain runs to 226 residues: PKHD-type hydroxylase Bpet2704 (226 aa).

One can recognise a Fe2OG dioxygenase domain in the interval 78–178 (KIFPPLFNRY…RISAFFWMQS (101 aa)). Fe cation-binding residues include histidine 96, aspartate 98, and histidine 159. Arginine 169 lines the 2-oxoglutarate pocket.

Fe(2+) serves as cofactor. L-ascorbate is required as a cofactor.

The polypeptide is PKHD-type hydroxylase Bpet2704 (Bordetella petrii (strain ATCC BAA-461 / DSM 12804 / CCUG 43448)).